Here is a 187-residue protein sequence, read N- to C-terminus: MNNEKELKKEETSVENKEKKVATEEIKKEKKDYKKIIQDLEKQIESCQKEIEFQKSLRNADIANLTKKRNEQEALVRKYGSSNLAEDLIKPIDLLKKVVETPTDIPELQNYLMGFKMIISQIENAFETNGIKAMGVKAGDEFDSSFHEANESLENSGMESNKIVSVISDGYMIHDRVLIHAIVKVAK.

The segment at 1 to 23 (MNNEKELKKEETSVENKEKKVAT) is disordered.

It belongs to the GrpE family. In terms of assembly, homodimer.

It localises to the cytoplasm. Participates actively in the response to hyperosmotic and heat shock by preventing the aggregation of stress-denatured proteins, in association with DnaK and GrpE. It is the nucleotide exchange factor for DnaK and may function as a thermosensor. Unfolded proteins bind initially to DnaJ; upon interaction with the DnaJ-bound protein, DnaK hydrolyzes its bound ATP, resulting in the formation of a stable complex. GrpE releases ADP from DnaK; ATP binding to DnaK triggers the release of the substrate protein, thus completing the reaction cycle. Several rounds of ATP-dependent interactions between DnaJ, DnaK and GrpE are required for fully efficient folding. The chain is Protein GrpE from Mesoplasma florum (strain ATCC 33453 / NBRC 100688 / NCTC 11704 / L1) (Acholeplasma florum).